Reading from the N-terminus, the 360-residue chain is Threonine synthase (360 aa).

K69 carries the N6-(pyridoxal phosphate)lysine modification. Pyridoxal 5'-phosphate contacts are provided by residues N95, G196 to N200, and T326.

The protein belongs to the threonine synthase family. As to quaternary structure, homodimer. Pyridoxal 5'-phosphate serves as cofactor.

It catalyses the reaction O-phospho-L-homoserine + H2O = L-threonine + phosphate. The protein operates within amino-acid biosynthesis; L-threonine biosynthesis; L-threonine from L-aspartate: step 5/5. Its function is as follows. Catalyzes the gamma-elimination of phosphate from L-phosphohomoserine and the beta-addition of water to produce L-threonine. The chain is Threonine synthase (thrC) from Mycobacterium leprae (strain TN).